Reading from the N-terminus, the 298-residue chain is Acetylglutamate kinase (298 aa).

Substrate-binding positions include 64-65 (GG), Arg-86, and Asn-195.

The protein belongs to the acetylglutamate kinase family. ArgB subfamily.

Its subcellular location is the cytoplasm. It carries out the reaction N-acetyl-L-glutamate + ATP = N-acetyl-L-glutamyl 5-phosphate + ADP. It functions in the pathway amino-acid biosynthesis; L-arginine biosynthesis; N(2)-acetyl-L-ornithine from L-glutamate: step 2/4. Catalyzes the ATP-dependent phosphorylation of N-acetyl-L-glutamate. This is Acetylglutamate kinase from Aquifex aeolicus (strain VF5).